The primary structure comprises 588 residues: MEQGRPRSSLSLASSASTVSSLSSLSTKKPTRAVHKVHAFGKRNNALRRDPNLPVHIRGWLHKQDSSGLRLWKRRWFVLSGHCLFYYKDSREESVLGSVLLPSYSVRPDGPGAPRGRRFTFTAEHPGMRTYVLAADTLEDLRGWLRALGRASRAEGEDCGLPRSPARPRPGEGPGGPGGPPEVNRREEGRISESPEVARLSRGLGRHETHTPNSTVDLQTDTWSRRTRSPELFSPLSRPPSPLSLPRPRSAPARRPPLSAGDISFPARPHTPLSRIDVRPPLDWGPQRQTLSRPPIPRRGPSSEAGGERPPRSPQPRTPEQRTQSTQATSGSSTYLQLPPRPPGTQASMILLPGPPVDSALHQSLETDTLLTKLCGQDRLLRQLQEDLDKRQEEKEQLEAALELTRQQLGQATREAAASGKAWGRQRLLQDRLVNVRAALCHLAQERERVWDTYSGLEQDLGTLRETLEYLLHLGSPQDRACAQQHLWMVEDTLAGLGGPQKQPPHTDPKSPSPAPQGEESSERESLSESLELSSPQSPEVDWSRPSGGDRALSSPQSGVGSPRVSRASSPECRQPSSPLLRTKVDHL.

Positions 54–153 (PVHIRGWLHK…WLRALGRASR (100 aa)) constitute a PH domain. 2 disordered regions span residues 155-349 (EGED…QASM) and 495-588 (AGLG…VDHL). S164 carries the phosphoserine modification. Residues 183 to 193 (VNRREEGRISE) are compositionally biased toward basic and acidic residues. Residues 211–222 (TPNSTVDLQTDT) show a composition bias toward polar residues. Composition is skewed to low complexity over residues 246 to 260 (PRPR…PLSA) and 321 to 334 (QRTQ…GSST). S562 is modified (phosphoserine).

Its subcellular location is the cytoplasm. The protein resides in the membrane. In terms of biological role, binds specifically to phosphatidylinositol 3-phosphate (PtdIns3P), but not to other phosphoinositides. The sequence is that of Pleckstrin homology domain-containing family A member 4 (Plekha4) from Mus musculus (Mouse).